A 456-amino-acid polypeptide reads, in one-letter code: Frizzled/smoothened-like sans CRD protein F (456 aa).

The first 30 residues, 1-30, serve as a signal peptide directing secretion; that stretch reads MIFNNLKNQNKIINFLIIFYFLSFLKQIES. The Extracellular portion of the chain corresponds to 31 to 92; the sequence is QSINITSSSS…PFFTINEWNK (62 aa). N34, N52, and N70 each carry an N-linked (GlcNAc...) asparagine glycan. Residues 93–113 form a helical membrane-spanning segment; sequence FLNMSLVMGTISFFSGLFLLV. The Cytoplasmic segment spans residues 114–127; the sequence is TYSPIVNKTHNRHT. Residues 128–148 traverse the membrane as a helical segment; that stretch reads IGVMCMSFGVCLAMCSDMWNF. Over 149–174 the chain is Extracellular; it reads GSNFTEKSICPSPGQYLSTSNARCLS. An N-linked (GlcNAc...) asparagine glycan is attached at N151. The helical transmembrane segment at 175 to 195 threads the bilayer; sequence SGIFLQFGGVFGFLNWTLLSF. The Cytoplasmic portion of the chain corresponds to 196 to 211; it reads DLFMNIKGIITKNYDK. The chain crosses the membrane as a helical span at residues 212–232; the sequence is YYVSGTFIIAIIFTFVPIVND. Over 233–252 the chain is Extracellular; it reads QYSMSYIGLGCWLGSAMYQL. A helical transmembrane segment spans residues 253-273; sequence IFFWILLSICLIVSSVFIILI. The Cytoplasmic portion of the chain corresponds to 274 to 297; sequence LKEVYIIIKLSKQKTSLKGNIRPL. A helical transmembrane segment spans residues 298–318; the sequence is ICISITGFAFFYMFFYYISIV. Over 319–354 the chain is Extracellular; it reads VEGDYYERVLNEYTDCLMDPTKDISECKSPRMSVAS. Residues 355 to 375 form a helical membrane-spanning segment; it reads EFVFLLCLRLLGIGAFIFYGI. Over 376-456 the chain is Cytoplasmic; sequence NNKVKKIWLN…ESSLNSVDEI (81 aa). The segment at 403 to 422 is disordered; the sequence is ADNDKSNSNGSKVLYRTNNT.

Belongs to the G-protein coupled receptor Fz/Smo family.

The protein resides in the membrane. In Dictyostelium discoideum (Social amoeba), this protein is Frizzled/smoothened-like sans CRD protein F (fscF).